A 33-amino-acid polypeptide reads, in one-letter code: Non-specific lipid-transfer protein (33 aa).

The cysteines at positions 14 and 29 are disulfide-linked.

Belongs to the plant LTP family. In terms of assembly, dimer.

Its function is as follows. Plant non-specific lipid-transfer proteins transfer phospholipids as well as galactolipids across membranes. May play a role in wax or cutin deposition in the cell walls of expanding epidermal cells and certain secretory tissues. Has antibacterial activity against Gram-positive bacteria S.aureus and S.epidermidis and blocks biofilm formation. In a mouse model, also protects against bacterial sepsis and has an anti-inflammatory effect. Exhibits antinociceptive activity upon oral or intraperitoneal application in mice. The sequence is that of Non-specific lipid-transfer protein from Morinda citrifolia (Indian mulberry).